A 209-amino-acid polypeptide reads, in one-letter code: Uracil phosphoribosyltransferase (209 aa).

5-phospho-alpha-D-ribose 1-diphosphate-binding positions include Arg-79, Arg-104, and 131–139 (DPMLATGGS). Residues Val-194 and 199–201 (GDA) each bind uracil. Asp-200 lines the 5-phospho-alpha-D-ribose 1-diphosphate pocket.

It belongs to the UPRTase family. Mg(2+) serves as cofactor.

It catalyses the reaction UMP + diphosphate = 5-phospho-alpha-D-ribose 1-diphosphate + uracil. It participates in pyrimidine metabolism; UMP biosynthesis via salvage pathway; UMP from uracil: step 1/1. Its activity is regulated as follows. Allosterically activated by GTP. Functionally, catalyzes the conversion of uracil and 5-phospho-alpha-D-ribose 1-diphosphate (PRPP) to UMP and diphosphate. This is Uracil phosphoribosyltransferase from Bacillus mycoides (strain KBAB4) (Bacillus weihenstephanensis).